A 697-amino-acid chain; its full sequence is Lebercilin (697 aa).

The interval 1–90 is disordered; it reads MGERAGSPGT…VGFRSQSLNR (90 aa). 2 positions are modified to phosphoserine: serine 7 and serine 45. A compositionally biased stretch (low complexity) spans 32 to 45; the sequence is SSGRSSLVSSSPAS. Coiled-coil stretches lie at residues 103 to 297 and 389 to 485; these read RILS…IKNI and EEKF…RNLK. 3 disordered regions span residues 412–432, 522–548, and 606–697; these read WERE…EREE, HHLQ…PASP, and EQLF…VALR. Residues 416 to 432 show a composition bias toward basic and acidic residues; sequence ELDKKQKEKASLLEREE. Residues 527 to 547 are compositionally biased toward polar residues; it reads ISFSTPKGEGQNSGNVRSPAS. The segment covering 612-626 has biased composition (low complexity); the sequence is SGSSTISSKSSDPNS. Acidic residues predominate over residues 686 to 697; that stretch reads SVEDEIEEVALR.

This sequence belongs to the LCA5 family. As to quaternary structure, interacts with NINL. Interacts with OFD1. Interacts with FAM161A. Interacts with components of the IFT complex B. In terms of tissue distribution, widely expressed.

Its subcellular location is the cytoplasm. It is found in the cytoskeleton. The protein resides in the cilium axoneme. The protein localises to the cilium basal body. It localises to the microtubule organizing center. Its subcellular location is the centrosome. It is found in the cell projection. The protein resides in the cilium. In terms of biological role, involved in intraflagellar protein (IFT) transport in photoreceptor cilia. The chain is Lebercilin (LCA5) from Homo sapiens (Human).